Consider the following 238-residue polypeptide: Pyridoxine 5'-phosphate synthase (238 aa).

Asn7 provides a ligand contact to 3-amino-2-oxopropyl phosphate. 9–10 (DH) provides a ligand contact to 1-deoxy-D-xylulose 5-phosphate. Arg18 is a 3-amino-2-oxopropyl phosphate binding site. His43 serves as the catalytic Proton acceptor. 2 residues coordinate 1-deoxy-D-xylulose 5-phosphate: Arg45 and His50. Residue Glu70 is the Proton acceptor of the active site. Thr100 contacts 1-deoxy-D-xylulose 5-phosphate. His190 functions as the Proton donor in the catalytic mechanism. Residues Gly191 and 212 to 213 (GH) each bind 3-amino-2-oxopropyl phosphate.

Belongs to the PNP synthase family. In terms of assembly, homooctamer; tetramer of dimers.

It is found in the cytoplasm. The catalysed reaction is 3-amino-2-oxopropyl phosphate + 1-deoxy-D-xylulose 5-phosphate = pyridoxine 5'-phosphate + phosphate + 2 H2O + H(+). Its pathway is cofactor biosynthesis; pyridoxine 5'-phosphate biosynthesis; pyridoxine 5'-phosphate from D-erythrose 4-phosphate: step 5/5. Its function is as follows. Catalyzes the complicated ring closure reaction between the two acyclic compounds 1-deoxy-D-xylulose-5-phosphate (DXP) and 3-amino-2-oxopropyl phosphate (1-amino-acetone-3-phosphate or AAP) to form pyridoxine 5'-phosphate (PNP) and inorganic phosphate. In Prochlorococcus marinus (strain MIT 9215), this protein is Pyridoxine 5'-phosphate synthase.